The following is a 118-amino-acid chain: NADH-quinone oxidoreductase subunit A (118 aa).

A run of 3 helical transmembrane segments spans residues 6–26 (LIIG…LLTA), 61–81 (FMYG…LPWA), and 87–107 (LGLF…IGLW).

The protein belongs to the complex I subunit 3 family. In terms of assembly, NDH-1 is composed of 14 different subunits. Subunits NuoA, H, J, K, L, M, N constitute the membrane sector of the complex.

It localises to the cell membrane. It carries out the reaction a quinone + NADH + 5 H(+)(in) = a quinol + NAD(+) + 4 H(+)(out). Functionally, NDH-1 shuttles electrons from NADH, via FMN and iron-sulfur (Fe-S) centers, to quinones in the respiratory chain. The immediate electron acceptor for the enzyme in this species is believed to be a menaquinone. Couples the redox reaction to proton translocation (for every two electrons transferred, four hydrogen ions are translocated across the cytoplasmic membrane), and thus conserves the redox energy in a proton gradient. This Clostridium beijerinckii (strain ATCC 51743 / NCIMB 8052) (Clostridium acetobutylicum) protein is NADH-quinone oxidoreductase subunit A.